The primary structure comprises 402 residues: Flagellar hook protein FlgE (402 aa).

The protein belongs to the flagella basal body rod proteins family.

It is found in the bacterial flagellum basal body. This is Flagellar hook protein FlgE (flgE) from Escherichia coli (strain K12).